Here is a 371-residue protein sequence, read N- to C-terminus: 3-dehydroquinate synthase (371 aa).

NAD(+) is bound by residues 114-118, 138-139, K151, K160, and 178-181; these read GVVGD, TT, and TLNT. Zn(2+) is bound by residues E193, H258, and H275.

It belongs to the sugar phosphate cyclases superfamily. Dehydroquinate synthase family. Requires Co(2+) as cofactor. Zn(2+) is required as a cofactor. The cofactor is NAD(+).

It localises to the cytoplasm. The catalysed reaction is 7-phospho-2-dehydro-3-deoxy-D-arabino-heptonate = 3-dehydroquinate + phosphate. Its pathway is metabolic intermediate biosynthesis; chorismate biosynthesis; chorismate from D-erythrose 4-phosphate and phosphoenolpyruvate: step 2/7. Its function is as follows. Catalyzes the conversion of 3-deoxy-D-arabino-heptulosonate 7-phosphate (DAHP) to dehydroquinate (DHQ). The polypeptide is 3-dehydroquinate synthase (Synechococcus sp. (strain CC9605)).